We begin with the raw amino-acid sequence, 44 residues long: Peptide Hact-4 (44 aa).

Cystine bridges form between C8–C42, C15–C34, and C20–C43.

As to expression, expressed in tentacles.

It is found in the nematocyst. The protein resides in the secreted. In terms of biological role, peptide with unknown function. Does not exhibit antimicrobial activity against Escherichia coli and Staphylococcus aureus. Does not exhibit any effect on human ion channel TRPV1 in a Xenopus laevis oocytes assay. The protein is Peptide Hact-4 of Heliofungia actiniformis (Mushroom coral).